Consider the following 461-residue polypeptide: Cysteine--tRNA ligase (461 aa).

Zn(2+) is bound at residue cysteine 28. A 'HIGH' region motif is present at residues 30-40; sequence ITVYDLCHIGH. Zn(2+) contacts are provided by cysteine 209, histidine 234, and glutamate 238. A 'KMSKS' region motif is present at residues 266 to 270; it reads KMSKS. Lysine 269 serves as a coordination point for ATP.

Belongs to the class-I aminoacyl-tRNA synthetase family. In terms of assembly, monomer. Zn(2+) is required as a cofactor.

The protein localises to the cytoplasm. It carries out the reaction tRNA(Cys) + L-cysteine + ATP = L-cysteinyl-tRNA(Cys) + AMP + diphosphate. This is Cysteine--tRNA ligase from Salmonella arizonae (strain ATCC BAA-731 / CDC346-86 / RSK2980).